A 1128-amino-acid chain; its full sequence is Glutamate receptor-interacting protein 1 (1128 aa).

Position 43 is a phosphoserine (S43). 6 PDZ domains span residues 53-136 (VVEL…EYEL), 150-238 (TVEV…EYDV), 252-336 (LVEV…LPHH), 472-561 (EVVL…EFDV), 573-658 (HVKL…RKDE), and 673-755 (TVEL…KKQT). Disordered stretches follow at residues 754–798 (QTDA…YPST) and 935–981 (MSLN…GRKS). Residues 944-974 (PRSQLGRQASFQERSSSRPHYSQTTRSNTLP) are compositionally biased toward polar residues. The region spanning 1004-1086 (KVTLYKDSDM…KLDLVISRNP (83 aa)) is the PDZ 7 domain. Positions 1093-1115 (IDQQSLPGDWSEQNSAFFQQPSH) are enriched in polar residues. The disordered stretch occupies residues 1093–1128 (IDQQSLPGDWSEQNSAFFQQPSHGGNLETREPTNTL).

As to quaternary structure, interacts with EPHA7, EPHB2, KIF5A, KIF5B, KIF5C, GRIA2, GRIA3, GRIPAP1/GRASP1, PPFIA1, PPFIA4, FRAS1, PLCD4, PTPRF and liprins-alpha. Can form homomultimers or heteromultimers with GRIP2. Forms a ternary complex with GRIA2 and CSPG4. Interacts with ATAD1 in an ATP-dependent manner. ATAD1-catalyzed ATP hydrolysis disrupts binding to ATAD1 and to GRIA2 and leads to AMPAR complex disassembly. Interacts with EFNB1, EFNB3 and the C-terminal tail of PRLHR. Interacts with SLC30A9. Interacts with BUD23. Forms a complex with NSG1, GRIA2 and STX12; controls the intracellular fate of AMPAR and the endosomal sorting of the GRIA2 subunit toward recycling and membrane targeting. Interacts with NSG1.

It localises to the cytoplasmic vesicle. The protein resides in the perikaryon. Its subcellular location is the cell projection. The protein localises to the dendrite. It is found in the cytoplasm. It localises to the endomembrane system. The protein resides in the postsynaptic cell membrane. Its subcellular location is the postsynaptic density. The protein localises to the endoplasmic reticulum membrane. Functionally, may play a role as a localized scaffold for the assembly of a multiprotein signaling complex and as mediator of the trafficking of its binding partners at specific subcellular location in neurons. Through complex formation with NSG1, GRIA2 and STX12 controls the intracellular fate of AMPAR and the endosomal sorting of the GRIA2 subunit toward recycling and membrane targeting. This Homo sapiens (Human) protein is Glutamate receptor-interacting protein 1 (GRIP1).